A 459-amino-acid polypeptide reads, in one-letter code: Smoothelin-like protein 1 (459 aa).

Residues 1–27 show a composition bias toward polar residues; that stretch reads MEQTEGNSSEDGTTVSPTAGNLETPGS. The disordered stretch occupies residues 1–314; it reads MEQTEGNSSE…RPRGPRAQNR (314 aa). 5 stretches are compositionally biased toward basic and acidic residues: residues 42–55, 75–105, 112–168, 185–211, and 221–232; these read SDKE…EHLC, DELK…KEDT, DTGK…KEDA, ADVK…KELV, and EQGKENESEERA. Positions 124 to 154 form a coiled coil; that stretch reads NEVREKEEAMLASEKQKVDEKETNLESKEKS. The span at 260–283 shows a compositional bias: low complexity; sequence PESTGETSPSASESSPSEVPGSPT. Positions 287 to 300 are enriched in basic and acidic residues; the sequence is PSEKKKDRAPERRV. Residue Ser301 is modified to Phosphoserine; by PKA and PKG. The region spanning 343–449 is the Calponin-homology (CH) domain; it reads GGVKNMLLEW…YIQELYRSLV (107 aa). The tract at residues 441-459 is calmodulin-binding; it reads IQELYRSLVQKGLVKTKKK.

Belongs to the smoothelin family. Interacts with PPP1R12A. Post-translationally, maximal phosphorylation of Ser-301 correlates with maximal relaxation of aorta in response to acetylcholine. As to expression, widely expressed, with highest expression in skeletal muscles (at protein level). Within striated muscles, significantly more expressed in soleus muscle compared with plantaris muscle or white vastus (at protein level). 30-40% lower expression in females than in males (at protein level). Expressed in type 2a fibers, but not detected in fast twitch type 2b muscle white vastus nor in oxidative type I/b heart muscle (at protein level). Expressed within myometrial cells of the uterus, as well as in the endometrial layer. In the aorta, confined to smooth muscle cells. Not detected in endothelial cells.

Its subcellular location is the cytoplasm. It localises to the myofibril. The protein localises to the sarcomere. It is found in the i band. The protein resides in the m line. Its subcellular location is the nucleus. In terms of biological role, plays a role in the regulation of contractile properties of both striated and smooth muscles. When unphosphorylated, may inhibit myosin dephosphorylation. Phosphorylation at Ser-301 reduces this inhibitory activity. The chain is Smoothelin-like protein 1 (Smtnl1) from Mus musculus (Mouse).